The chain runs to 330 residues: DNA-directed RNA polymerase subunit alpha (330 aa).

An alpha N-terminal domain (alpha-NTD) region spans residues 1–231; that stretch reads MQTNLLKPKT…EQLAVFAQLE (231 aa). The tract at residues 250–330 is alpha C-terminal domain (alpha-CTD); that stretch reads FDPILLRPVD…NWPPAGLDKR (81 aa).

The protein belongs to the RNA polymerase alpha chain family. Homodimer. The RNAP catalytic core consists of 2 alpha, 1 beta, 1 beta' and 1 omega subunit. When a sigma factor is associated with the core the holoenzyme is formed, which can initiate transcription.

The catalysed reaction is RNA(n) + a ribonucleoside 5'-triphosphate = RNA(n+1) + diphosphate. Functionally, DNA-dependent RNA polymerase catalyzes the transcription of DNA into RNA using the four ribonucleoside triphosphates as substrates. The chain is DNA-directed RNA polymerase subunit alpha from Paracidovorax citrulli (strain AAC00-1) (Acidovorax citrulli).